The chain runs to 294 residues: Ribosomal protein L11 methyltransferase (294 aa).

4 residues coordinate S-adenosyl-L-methionine: T144, G165, D187, and N229.

It belongs to the methyltransferase superfamily. PrmA family.

The protein localises to the cytoplasm. The catalysed reaction is L-lysyl-[protein] + 3 S-adenosyl-L-methionine = N(6),N(6),N(6)-trimethyl-L-lysyl-[protein] + 3 S-adenosyl-L-homocysteine + 3 H(+). Functionally, methylates ribosomal protein L11. In Pseudomonas paraeruginosa (strain DSM 24068 / PA7) (Pseudomonas aeruginosa (strain PA7)), this protein is Ribosomal protein L11 methyltransferase.